Here is a 379-residue protein sequence, read N- to C-terminus: MYVLGMMSGTSADGVDTVLAEFTGNPDQPQWRIINSTSHEYPNNLKQAIIDFGQGCSFSSQQFIELSEAITEFYAMAAKSCDPKGIALIAGCHGQTVFHRPPSGAKRGSSLQILQAPLLAILIDKTVIYDFRSKDLALGGQGAPLVPLLDAALIGACTGWRAVLNLGGIANISLIPPRSGPDKTSPVLGWDCGPANTLIDLAVQQRTNHELYFDHDGLIALNGSPDFDAIEQWLNEPFFKKPPPKSTGREQFGLKDLERRMTQINRSSTKDLVSTLTIFSACVIAQDLHNLYKSKMIKPIELFIAGGGSENPVLFREIQLRCRGMRVRSIGEIGIPVKSREPLTFALLAWWHLLNKPGSSTAITGVSKGAVLGVQVHPN.

An ATP-binding site is contributed by 9 to 16 (GTSADGVD).

Belongs to the anhydro-N-acetylmuramic acid kinase family.

It carries out the reaction 1,6-anhydro-N-acetyl-beta-muramate + ATP + H2O = N-acetyl-D-muramate 6-phosphate + ADP + H(+). The protein operates within amino-sugar metabolism; 1,6-anhydro-N-acetylmuramate degradation. Its pathway is cell wall biogenesis; peptidoglycan recycling. Catalyzes the specific phosphorylation of 1,6-anhydro-N-acetylmuramic acid (anhMurNAc) with the simultaneous cleavage of the 1,6-anhydro ring, generating MurNAc-6-P. Is required for the utilization of anhMurNAc either imported from the medium or derived from its own cell wall murein, and thus plays a role in cell wall recycling. This is Anhydro-N-acetylmuramic acid kinase from Prochlorococcus marinus (strain MIT 9211).